The following is a 347-amino-acid chain: Heat-inducible transcription repressor HrcA (347 aa).

Belongs to the HrcA family.

Functionally, negative regulator of class I heat shock genes (grpE-dnaK-dnaJ and groELS operons). Prevents heat-shock induction of these operons. This chain is Heat-inducible transcription repressor HrcA, found in Nocardia farcinica (strain IFM 10152).